A 313-amino-acid chain; its full sequence is Zinc transporter ZitB (313 aa).

At Met-1–Arg-20 the chain is on the cytoplasmic side. The chain crosses the membrane as a helical span at residues Leu-21–Leu-41. Residues Ser-42 to Leu-47 lie on the Periplasmic side of the membrane. A helical transmembrane segment spans residues Leu-48–Val-68. The Cytoplasmic portion of the chain corresponds to Gln-69–Leu-89. A helical membrane pass occupies residues Ala-90 to Ile-110. Over Glu-111–Gly-121 the chain is Periplasmic. A helical membrane pass occupies residues Gly-122–Leu-142. Topologically, residues His-143–His-159 are cytoplasmic. The helical transmembrane segment at Val-160–Thr-180 threads the bilayer. Residue Gly-181 is a topological domain, periplasmic. A helical membrane pass occupies residues Trp-182 to Trp-202. Residues Arg-203 to His-313 are Cytoplasmic-facing.

Belongs to the cation diffusion facilitator (CDF) transporter (TC 2.A.4) family. SLC30A subfamily.

The protein resides in the cell inner membrane. Involved in zinc efflux across the cytoplasmic membrane, thus reducing zinc accumulation in the cytoplasm and rendering bacteria more resistant to zinc. It may contribute to zinc homeostasis at low concentrations of zinc. This chain is Zinc transporter ZitB (zitB), found in Shigella flexneri.